A 91-amino-acid polypeptide reads, in one-letter code: Small ribosomal subunit protein uS15 (91 aa).

Belongs to the universal ribosomal protein uS15 family. As to quaternary structure, part of the 30S ribosomal subunit. Forms a bridge to the 50S subunit in the 70S ribosome, contacting the 23S rRNA.

One of the primary rRNA binding proteins, it binds directly to 16S rRNA where it helps nucleate assembly of the platform of the 30S subunit by binding and bridging several RNA helices of the 16S rRNA. In terms of biological role, forms an intersubunit bridge (bridge B4) with the 23S rRNA of the 50S subunit in the ribosome. This Nautilia profundicola (strain ATCC BAA-1463 / DSM 18972 / AmH) protein is Small ribosomal subunit protein uS15.